A 520-amino-acid chain; its full sequence is GMP synthase [glutamine-hydrolyzing] (520 aa).

The 194-residue stretch at 12-205 (KIIVLDYGSQ…AVNICGARGD (194 aa)) folds into the Glutamine amidotransferase type-1 domain. C89 acts as the Nucleophile in catalysis. Residues H179 and E181 contribute to the active site. The GMPS ATP-PPase domain maps to 206–395 (WSMDNFIDME…LGMPDEVVWR (190 aa)). 233–239 (SGGVDSS) provides a ligand contact to ATP.

Homodimer.

The catalysed reaction is XMP + L-glutamine + ATP + H2O = GMP + L-glutamate + AMP + diphosphate + 2 H(+). Its pathway is purine metabolism; GMP biosynthesis; GMP from XMP (L-Gln route): step 1/1. Functionally, catalyzes the synthesis of GMP from XMP. In Streptococcus agalactiae serotype III (strain NEM316), this protein is GMP synthase [glutamine-hydrolyzing].